Here is a 400-residue protein sequence, read N- to C-terminus: Dual specificity mitogen-activated protein kinase kinase 2 (400 aa).

At M1 the chain carries N-acetylmethionine. S23 carries the phosphoserine modification. The 298-residue stretch at 72-369 (FERISELGAG…LKMLTNHTFI (298 aa)) folds into the Protein kinase domain. ATP is bound by residues 78 to 86 (LGAGNGGVV) and K101. Catalysis depends on D194, which acts as the Proton acceptor. A (Microbial infection) O-acetylserine; by Yersinia YopJ; alternate mark is found at S222 and S226. Phosphoserine; by RAF; alternate is present on S222. Residue S226 is modified to Phosphoserine; alternate. The interval 286 to 310 (GEEGEPHSISPRPRPPGRPVSGHGM) is disordered. Phosphoserine is present on residues S293, S295, and S306. Phosphothreonine occurs at positions 394 and 396.

This sequence belongs to the protein kinase superfamily. STE Ser/Thr protein kinase family. MAP kinase kinase subfamily. In terms of assembly, interacts with MORG1. Interacts with SGK1. Interacts with KSR1. Interacts with KSR1 and BRAF; the interaction with KSR1 mediates KSR1-BRAF dimerization. Interacts with GLS. The cofactor is Mg(2+). MAPKK is itself dependent on Ser/Thr phosphorylation for activity catalyzed by MAP kinase kinase kinases (RAF or MEKK1). Phosphorylated by MAP2K1/MEK1. In terms of processing, (Microbial infection) Acetylation of Ser-222 and Ser-226 by Yersinia YopJ prevents phosphorylation and activation, thus blocking the MAPK signaling pathway.

Its subcellular location is the cytoplasm. It is found in the membrane. It carries out the reaction L-seryl-[protein] + ATP = O-phospho-L-seryl-[protein] + ADP + H(+). It catalyses the reaction L-threonyl-[protein] + ATP = O-phospho-L-threonyl-[protein] + ADP + H(+). The enzyme catalyses L-tyrosyl-[protein] + ATP = O-phospho-L-tyrosyl-[protein] + ADP + H(+). In terms of biological role, catalyzes the concomitant phosphorylation of a threonine and a tyrosine residue in a Thr-Glu-Tyr sequence located in MAP kinases. Activates the ERK1 and ERK2 MAP kinases. Activates BRAF in a KSR1 or KSR2-dependent manner; by binding to KSR1 or KSR2 releases the inhibitory intramolecular interaction between KSR1 or KSR2 protein kinase and N-terminal domains which promotes KSR1 or KSR2-BRAF dimerization and BRAF activation. This chain is Dual specificity mitogen-activated protein kinase kinase 2 (MAP2K2), found in Homo sapiens (Human).